Here is a 564-residue protein sequence, read N- to C-terminus: Myb-like protein F (564 aa).

Disordered stretches follow at residues 22 to 107, 122 to 203, and 310 to 410; these read YNNS…NYNN, NYNN…YNGG, and NYNN…TKKY. Positions 23-79 are enriched in low complexity; it reads NNSNHYNDNNDNNNNNNNNNNDNNNNDNNNNNNNNNNSIINNESDNESNGTSNNYND. The span at 82–96 shows a compositional bias: basic and acidic residues; it reads NDNHHHHQDDEHHGN. 4 stretches are compositionally biased toward low complexity: residues 97 to 107, 135 to 173, 193 to 203, and 310 to 364; these read GNDNDNENYNN, EINSNHNNDNNNNTNNNDNSSNNNNNNNNSNNNNNNNSK, NNNNNNKYNGG, and NYNN…NSSN. Residues 365–409 are compositionally biased toward basic and acidic residues; the sequence is KEYKEKEYKEKEYKEKEFKESKDSSLKRKSSSDDDGDDSGRDTKK. One can recognise an SANT domain in the interval 412–464; that stretch reads PGRTVWTLEEEELYKEVFNHYGKNWKKIKTHFPDKSKSQVTSHGQYLIKINKL. The span at 519–556 shows a compositional bias: low complexity; the sequence is NNENTNDNNNHNNNNYNDNNNNSNNNNNFNNSNNNNTN. The disordered stretch occupies residues 519–564; it reads NNENTNDNNNHNNNNYNDNNNNSNNNNNFNNSNNNNTNKFIDEDDD.

It localises to the nucleus. The polypeptide is Myb-like protein F (mybF) (Dictyostelium discoideum (Social amoeba)).